Consider the following 658-residue polypeptide: Staphylocoagulase (658 aa).

The N-terminal stretch at 1-26 is a signal peptide; the sequence is MKKQIISLGALAVASSLFTWDNKADA. Polar residues-rich tracts occupy residues 391–406, 428–440, 499–514, and 521–531; these read MEQN…TQPT, GTES…QGES, PSET…QDGT, and PTQNKPSETNA. Residues 391-531 are disordered; that stretch reads MEQNRPSLSD…TQNKPSETNA (141 aa). 6 consecutive repeat copies span residues 492-518, 519-545, 546-572, 573-599, 600-626, and 627-653. The interval 492–653 is 6 X 27 AA tandem repeats of A-R-P-[RT]-[FQY]-[NK]-K-P-S-[EK]-T-N-A-Y-N-V-T-T-[NH]-[QA]-[DN]-G-[TQ]-[VA]-[ST]-Y-G; that stretch reads ARPRFNKPSE…THADGTATYG (162 aa). A disordered region spans residues 619 to 658; the sequence is ANGQVSYGARPTQKKPSETNAYNVTTHADGTATYGPRVTK. The span at 636-646 shows a compositional bias: polar residues; it reads ETNAYNVTTHA.

This sequence belongs to the staphylocoagulase family.

Its function is as follows. Staphylocoagulase is an extracellular protein which specifically forms a complex with human prothrombin. This complex named staphylothrombin can clot fibrinogen without any proteolytic cleavage of prothrombin. This chain is Staphylocoagulase, found in Staphylococcus aureus.